We begin with the raw amino-acid sequence, 145 residues long: Deoxyuridine 5'-triphosphate nucleotidohydrolase (145 aa).

Residues 64–66 (RSG), Asn77, 81–83 (TID), and Met91 each bind substrate.

This sequence belongs to the dUTPase family. Mg(2+) is required as a cofactor.

It carries out the reaction dUTP + H2O = dUMP + diphosphate + H(+). It functions in the pathway pyrimidine metabolism; dUMP biosynthesis; dUMP from dCTP (dUTP route): step 2/2. Functionally, this enzyme is involved in nucleotide metabolism: it produces dUMP, the immediate precursor of thymidine nucleotides and it decreases the intracellular concentration of dUTP so that uracil cannot be incorporated into DNA. This chain is Deoxyuridine 5'-triphosphate nucleotidohydrolase, found in Leptospira interrogans serogroup Icterohaemorrhagiae serovar copenhageni (strain Fiocruz L1-130).